A 1742-amino-acid polypeptide reads, in one-letter code: NACHT and WD repeat domain-containing protein 2 (1742 aa).

LRR repeat units lie at residues 386–410 (FYEYKCESLNILHKYILPSKTGHIN), 677–698 (LEDVLALDNSVMNELNENTRPS), 724–747 (VKNVTLLVWANRHLQLIAQKLYLQ), 883–906 (YSQEKELKFLASTLRSIRNKVIAF), and 925–953 (LPKLRHLLLECDKDGPKYCSIVPLHSSMD). Positions 410–737 (NPLVVYGGPC…TLLVWANRHL (328 aa)) constitute an NACHT domain. WD repeat units lie at residues 963-1004 (LASS…LLRQ), 1007-1046 (TAQSVILGMKLSSDEKYLVVATTNNTLLIYDNVNSCLLSE), 1140-1179 (FSGGFVKFLLILDTAQEMVMVDSEGSLSVWNTEDISNPQL), 1229-1271 (RHNE…ASLQ), 1272-1311 (ESSGTIVKLVKSSHHNMLLSLSTSGVLSIWDIDIITAMSN), 1314-1353 (KTGKPIQSLVLPARGEIIYSLDGSDCVHKWNFSSGFIEAV), 1355-1394 (KHEGIVEHCVLTSTGDLMVTSDDKSSQYVWHTSSGENLFR), 1396-1434 (NGQRISQLLITHNDQFVVSLCEENASRVWRLATGHRVCN), 1476-1516 (EDGI…ICRR), 1522-1561 (NFLKNLEDFEISPNGKLGIISRGDENINVLDLHSGKLRVV), and 1614-1653 (SLYKTPTFLALSQRHLNIIVGFDDGSIGIYTVVDRVDAAL). A disordered region spans residues 1702–1721 (PITVSDSSESNEATPSKKHN). Positions 1703–1715 (ITVSDSSESNEAT) are enriched in polar residues.

This chain is NACHT and WD repeat domain-containing protein 2 (Nwd2), found in Mus musculus (Mouse).